A 93-amino-acid polypeptide reads, in one-letter code: Defensin-like protein 209 (93 aa).

An N-terminal signal peptide occupies residues 1–19; sequence MKITILFLTLLVLSSSCTS. 3 disulfides stabilise this stretch: cysteine 63-cysteine 80, cysteine 66-cysteine 85, and cysteine 70-cysteine 87.

It belongs to the DEFL family.

The protein resides in the secreted. The sequence is that of Defensin-like protein 209 from Arabidopsis thaliana (Mouse-ear cress).